The following is a 308-amino-acid chain: MDALKSAGRALIRSPSLAKQSWAGGRHRKLPENWTDTRETLLEGMVFSLKYLGMTLVERPKGEELSAAAVKRIVATAKASGKKLQKVTLKVSPRGIILTDSLTSQLIENVSIYRISYCTADKMHDKVFAYIAQSQQNESLECHAFLCTKRKVAQAVTLTVAQAFKVAFEFWQVSKEEKEKREKANQEGGDVPGTRRDSTPSLKTLVATGNLLDLEEVAKAPLSTVSANTNNVDETPRPQVLGNNSVVWELDDGLDEAFSRLAQSRTNPQVLDTGLSAQDIHYAQCLSPTDWDKPDSSGIDQDDDVFTF.

At Met1 the chain carries N-acetylmethionine. Ser14 is subject to Phosphoserine. A PID domain is found at 41–195 (LLEGMVFSLK…QEGGDVPGTR (155 aa)). The segment at 179–201 (EKREKANQEGGDVPGTRRDSTPS) is disordered. Phosphoserine is present on residues Ser198 and Ser201. A Clathrin box motif is present at residues 211–215 (LLDLE). An AP-2 complex binding region spans residues 248–275 (WELDDGLDEAFSRLAQSRTNPQVLDTGL). The [DE]-X(1,2)-F-X-X-[FL]-X-X-X-R motif signature appears at 256–265 (EAFSRLAQSR). The tract at residues 288–308 (PTDWDKPDSSGIDQDDDVFTF) is disordered.

Interacts (via PID domain) with LDLR (via NPXY motif). Binds to soluble clathrin trimers. Interacts with AP2B1; the interaction mediates the association with the AP-2 complex. Interacts with VLDLR. Interacts with LRP2.

Its subcellular location is the cytoplasm. Its function is as follows. Adapter protein (clathrin-associated sorting protein (CLASP)) required for efficient endocytosis of the LDL receptor (LDLR) in polarized cells such as hepatocytes and lymphocytes, but not in non-polarized cells (fibroblasts). May be required for LDL binding and internalization but not for receptor clustering in coated pits. May facilitate the endocytosis of LDLR and LDLR-LDL complexes from coated pits by stabilizing the interaction between the receptor and the structural components of the pits. May also be involved in the internalization of other LDLR family members. Binds to phosphoinositides, which regulate clathrin bud assembly at the cell surface. Required for trafficking of LRP2 to the endocytic recycling compartment which is necessary for LRP2 proteolysis, releasing a tail fragment which translocates to the nucleus and mediates transcriptional repression. This is Low density lipoprotein receptor adapter protein 1 from Mus musculus (Mouse).